The sequence spans 379 residues: Homoserine O-acetyltransferase (379 aa).

The AB hydrolase-1 domain maps to 45-355 (NAILILHALT…PHGHDAFLIE (311 aa)). Ser151 (nucleophile) is an active-site residue. Substrate is bound at residue Arg220. Residues Asp316 and His349 contribute to the active site. Substrate is bound at residue Asp350.

It belongs to the AB hydrolase superfamily. MetX family. In terms of assembly, homodimer.

The protein localises to the cytoplasm. The enzyme catalyses L-homoserine + acetyl-CoA = O-acetyl-L-homoserine + CoA. It functions in the pathway amino-acid biosynthesis; L-methionine biosynthesis via de novo pathway; O-acetyl-L-homoserine from L-homoserine: step 1/1. Its function is as follows. Transfers an acetyl group from acetyl-CoA to L-homoserine, forming acetyl-L-homoserine. This chain is Homoserine O-acetyltransferase, found in Carboxydothermus hydrogenoformans (strain ATCC BAA-161 / DSM 6008 / Z-2901).